A 228-amino-acid polypeptide reads, in one-letter code: AA9 family lytic polysaccharide monooxygenase A (228 aa).

Cu(2+) contacts are provided by H1 and H86. Residue H1 is modified to Methylhistidine. Intrachain disulfides connect C56–C178 and C97–C101. N-linked (GlcNAc...) asparagine glycosylation occurs at N138. O2-binding residues include H164 and Q173. Y175 lines the Cu(2+) pocket.

The protein belongs to the polysaccharide monooxygenase AA9 family. Cu(2+) is required as a cofactor. The catalytically essential N-terminal histidine His-22 is post-translationally modified by methylation to prevent protonation of the histidine side chain, and protect the critical active site of the enzyme from oxidative damage.

Its subcellular location is the secreted. It catalyses the reaction [(1-&gt;4)-beta-D-glucosyl]n+m + reduced acceptor + O2 = 4-dehydro-beta-D-glucosyl-[(1-&gt;4)-beta-D-glucosyl]n-1 + [(1-&gt;4)-beta-D-glucosyl]m + acceptor + H2O.. Small amounts of H(2)O(2) boost LPMO activity, while higher amounts lead to inactivation of the enzyme. Functionally, lytic polysaccharide monooxygenase (LPMO) that depolymerizes crystalline and amorphous polysaccharides via the oxidation of scissile alpha- or beta-(1-4)-glycosidic bonds, yielding C1 and C4 oxidation product. Catalysis by LPMOs requires the reduction of the active-site copper from Cu(II) to Cu(I) by a reducing agent and H(2)O(2) or O(2) as a cosubstrate. Is able to cleave cellulose and xylan to produce C1- and C4-oxidized products. The sequence is that of AA9 family lytic polysaccharide monooxygenase A from Thermoascus aurantiacus.